Consider the following 224-residue polypeptide: UPF0758 protein BPUM_2444 (224 aa).

The region spanning 102–224 (VIRTPEDGAN…FVSLKEKGYL (123 aa)) is the MPN domain. Positions 173, 175, and 186 each coordinate Zn(2+). Residues 173–186 (HNHPSGDPTPSRED) carry the JAMM motif motif.

Belongs to the UPF0758 family.

This chain is UPF0758 protein BPUM_2444, found in Bacillus pumilus (strain SAFR-032).